The following is a 434-amino-acid chain: Chaperone SurA (434 aa).

The first 20 residues, 1–20, serve as a signal peptide directing secretion; the sequence is MKNWRTLILGLVICANTAFA. 2 consecutive PpiC domains span residues 171-272 and 282-382; these read DTEL…KVND and VTEV…QLVD.

It is found in the periplasm. The enzyme catalyses [protein]-peptidylproline (omega=180) = [protein]-peptidylproline (omega=0). Its function is as follows. Chaperone involved in the correct folding and assembly of outer membrane proteins. Recognizes specific patterns of aromatic residues and the orientation of their side chains, which are found more frequently in integral outer membrane proteins. May act in both early periplasmic and late outer membrane-associated steps of protein maturation. This chain is Chaperone SurA, found in Yersinia pestis bv. Antiqua (strain Antiqua).